The following is a 275-amino-acid chain: Methylglyoxal reductase DkgA (275 aa).

Tyr51 functions as the Proton donor in the catalytic mechanism. Residue His107 coordinates substrate. NADP(+) is bound at residue 187-241 (SPLAQGGEGVFDQKVIRELADKYGKTPAQIVIRWHLDCGLVVIPKSVTPSRIAEN).

Belongs to the aldo/keto reductase family. In terms of assembly, monomer.

The protein localises to the cytoplasm. It catalyses the reaction hydroxyacetone + NADP(+) = methylglyoxal + NADPH + H(+). In terms of biological role, aldo-keto reductase that significantly contributes to cellular methylglyoxal detoxification by catalyzing the NADPH-dependent conversion of methylglyoxal to acetol. This is Methylglyoxal reductase DkgA from Salmonella typhimurium (strain LT2 / SGSC1412 / ATCC 700720).